Consider the following 434-residue polypeptide: Calcium uptake protein 2, mitochondrial (434 aa).

Residues 1–22 (MAAAAGSCARVAAWGGKLRRGL) constitute a mitochondrion transit peptide. Residues 172–207 (KPHSGFHVAFKMLDTDGNEMIEKREFFKLQKIISKQ) enclose the EF-hand 1 domain. Asp185, Asp187, Asn189, Met191, Glu193, and Glu196 together coordinate Ca(2+). Ser205 is modified (phosphoserine). The region spanning 227 to 262 (EPEINTTLQMRFFGKRGQRKLHYKEFRRFMENLQTE) is the EF-hand 2; degenerate domain. Positions 293–328 (TENKDIYWKNVREKLSAGESISLDEFKSFCHFTTHL) constitute an EF-hand 3; degenerate domain. Residues 362-397 (LSNNILDTVFKIFDLDGDECLSHEEFLGVLKNRMHR) enclose the EF-hand 4 domain. The Ca(2+) site is built by Asp375, Asp377, Asp379, Cys381, and Glu386.

Belongs to the MICU1 family. MICU2 subfamily. Heterodimer; disulfide-linked; heterodimerizes with MICU1. Component of the uniplex complex, composed of MCU, EMRE/SMDT1, MICU1 and MICU2 in a 4:4:1:1 stoichiometry.

The protein resides in the mitochondrion intermembrane space. It localises to the mitochondrion inner membrane. In terms of biological role, calcium sensor of the mitochondrial calcium uniporter (MCU) channel, which senses calcium level via its EF-hand domains. MICU1 and MICU2 form a disulfide-linked heterodimer that stimulates and inhibits MCU activity, depending on the concentration of calcium. At low calcium levels, MICU1 occludes the pore of the MCU channel, preventing mitochondrial calcium uptake. At higher calcium levels, calcium-binding to MICU1 and MICU2 induces a conformational change that weakens MCU-MICU1 interactions and moves the MICU1-MICU2 heterodimer away from the pore, allowing calcium permeation through the MCU channel. This is Calcium uptake protein 2, mitochondrial from Homo sapiens (Human).